The following is a 587-amino-acid chain: Cyclic di-GMP phosphodiesterase PA2567 (587 aa).

The GAF domain occupies 28–157 (DEVFEEILAA…LEHFARLVMA (130 aa)). A GGDEF domain is found at 192 to 327 (GALTVIAADL…GVGWARYNPP (136 aa)). Residues 335 to 587 (AFTLLTSLSQ…PEQLEDWLRR (253 aa)) enclose the EAL domain.

The enzyme catalyses 3',3'-c-di-GMP + H2O = 5'-phosphoguanylyl(3'-&gt;5')guanosine + H(+). Phosphodiesterase (PDE) that catalyzes the hydrolysis of cyclic diguanylate (c-di-GMP) to 5'-pGpG. This is Cyclic di-GMP phosphodiesterase PA2567 from Pseudomonas aeruginosa (strain ATCC 15692 / DSM 22644 / CIP 104116 / JCM 14847 / LMG 12228 / 1C / PRS 101 / PAO1).